A 481-amino-acid polypeptide reads, in one-letter code: tRNA-guanine(15) transglycosylase (481 aa).

Catalysis depends on Asp87, which acts as the Nucleophile. Residues Asp122 and Ala191 each coordinate substrate. Zn(2+)-binding residues include Cys273, Cys275, and Cys278.

This sequence belongs to the archaeosine tRNA-ribosyltransferase family. It depends on Zn(2+) as a cofactor.

The catalysed reaction is guanosine(15) in tRNA + 7-cyano-7-deazaguanine = 7-cyano-7-carbaguanosine(15) in tRNA + guanine. Its pathway is tRNA modification; archaeosine-tRNA biosynthesis. Its function is as follows. Exchanges the guanine residue with 7-cyano-7-deazaguanine (preQ0) at position 15 in the dihydrouridine loop (D-loop) of archaeal tRNAs. This Archaeoglobus fulgidus (strain ATCC 49558 / DSM 4304 / JCM 9628 / NBRC 100126 / VC-16) protein is tRNA-guanine(15) transglycosylase.